A 413-amino-acid polypeptide reads, in one-letter code: Adenylosuccinate synthetase (413 aa).

GTP-binding positions include 11–17 (GDEGKGK) and 39–41 (GHT). D12 (proton acceptor) is an active-site residue. 2 residues coordinate Mg(2+): D12 and G39. Residues 12–15 (DEGK), 37–40 (NAGH), T125, R139, Q217, T232, and R296 contribute to the IMP site. Catalysis depends on H40, which acts as the Proton donor. Substrate is bound at residue 292–298 (TTTGRPR). Residues R298, 324 to 326 (KLD), and 402 to 404 (STG) each bind GTP.

It belongs to the adenylosuccinate synthetase family. In terms of assembly, homodimer. It depends on Mg(2+) as a cofactor.

It is found in the cytoplasm. It catalyses the reaction IMP + L-aspartate + GTP = N(6)-(1,2-dicarboxyethyl)-AMP + GDP + phosphate + 2 H(+). Its pathway is purine metabolism; AMP biosynthesis via de novo pathway; AMP from IMP: step 1/2. In terms of biological role, plays an important role in the de novo pathway of purine nucleotide biosynthesis. Catalyzes the first committed step in the biosynthesis of AMP from IMP. The chain is Adenylosuccinate synthetase from Nautilia profundicola (strain ATCC BAA-1463 / DSM 18972 / AmH).